The sequence spans 290 residues: ATP synthase gamma chain (290 aa).

This sequence belongs to the ATPase gamma chain family. As to quaternary structure, F-type ATPases have 2 components, CF(1) - the catalytic core - and CF(0) - the membrane proton channel. CF(1) has five subunits: alpha(3), beta(3), gamma(1), delta(1), epsilon(1). CF(0) has three main subunits: a, b and c.

The protein resides in the cell inner membrane. In terms of biological role, produces ATP from ADP in the presence of a proton gradient across the membrane. The gamma chain is believed to be important in regulating ATPase activity and the flow of protons through the CF(0) complex. In Buchnera aphidicola subsp. Acyrthosiphon pisum (strain APS) (Acyrthosiphon pisum symbiotic bacterium), this protein is ATP synthase gamma chain.